The chain runs to 411 residues: Na(+)-translocating NADH-quinone reductase subunit F (411 aa).

Residues 5–25 (VILALGIAAFTVIVLVLVAII) form a helical membrane-spanning segment. The region spanning 36 to 130 (GDITIDINDD…NMEVELPEEI (95 aa)) is the 2Fe-2S ferredoxin-type domain. Residues Cys73, Cys79, Cys82, and Cys114 each contribute to the [2Fe-2S] cluster site. Positions 133–273 (VKKWECTVIS…SGPFGEFFAK (141 aa)) constitute an FAD-binding FR-type domain.

Belongs to the NqrF family. Composed of six subunits; NqrA, NqrB, NqrC, NqrD, NqrE and NqrF. [2Fe-2S] cluster serves as cofactor. The cofactor is FAD.

The protein resides in the cell inner membrane. It carries out the reaction a ubiquinone + n Na(+)(in) + NADH + H(+) = a ubiquinol + n Na(+)(out) + NAD(+). NQR complex catalyzes the reduction of ubiquinone-1 to ubiquinol by two successive reactions, coupled with the transport of Na(+) ions from the cytoplasm to the periplasm. The first step is catalyzed by NqrF, which accepts electrons from NADH and reduces ubiquinone-1 to ubisemiquinone by a one-electron transfer pathway. The sequence is that of Na(+)-translocating NADH-quinone reductase subunit F from Haemophilus influenzae (strain PittGG).